A 378-amino-acid polypeptide reads, in one-letter code: MADGLRVALVAGEASGDILGSGLMQALRARHPDIEFIGVGGPRMEAEGLSSYFPMERLSVMGLVEVLGRLPELLRRRKRLIRTLIEARPDVMIGIDAPDFTLGVEHKLRQAGLRTVHYVSPSVWAWRQKRVLKIREACDLMLALFPFEARFYEEHGVPVRFVGHPLANTIPLQADRAAARARLGLPADGQVLALMPGSRGGEVGKLGALFLDTAQRLLVERPGLRFVLPCASAARREQIEQMLQGREPLPLTLLDGASHEALAACDAVLIASGTATLEALLYKRPMVVAYRVAGLTYRILKRLVKSPYISLPNLLAGRLLVPELIQDAATPQALAATLSPLLDDGSQQVEFFDAIHRALRQDASAQAAEAVLQLVERR.

Belongs to the LpxB family.

The enzyme catalyses a lipid X + a UDP-2-N,3-O-bis[(3R)-3-hydroxyacyl]-alpha-D-glucosamine = a lipid A disaccharide + UDP + H(+). It participates in bacterial outer membrane biogenesis; LPS lipid A biosynthesis. Condensation of UDP-2,3-diacylglucosamine and 2,3-diacylglucosamine-1-phosphate to form lipid A disaccharide, a precursor of lipid A, a phosphorylated glycolipid that anchors the lipopolysaccharide to the outer membrane of the cell. This Pseudomonas aeruginosa (strain LESB58) protein is Lipid-A-disaccharide synthase.